The sequence spans 1057 residues: Nuclear RNAi defective-3 protein (1057 aa).

2 disordered regions span residues 1-89 and 344-388; these read MDLL…GLSV and LTNS…ERTV. Residues 17 to 30 show a composition bias toward low complexity; the sequence is STAKKPATSASSTP. 2 stretches are compositionally biased toward basic and acidic residues: residues 67–81 and 356–388; these read PKRE…DPKR and GGRE…ERTV. A PAZ domain is found at 387 to 500; it reads TVSHYQRQFQ…YPMELMSILP (114 aa). Residues 677 to 1001 enclose the Piwi domain; sequence GIIAEKRPDM…LAKRGHNNYK (325 aa).

The protein resides in the cytoplasm. The protein localises to the nucleus. Functionally, transports small interfering RNAs (siRNAs) from the cytoplasm to the nucleus. Required for RNA interference (RNAi) in nuclei. Required for exogenous RNAi-induced H3K27 methylation. The protein is Nuclear RNAi defective-3 protein (nrde-3) of Caenorhabditis elegans.